The sequence spans 55 residues: Large ribosomal subunit protein bL33 (55 aa).

The protein belongs to the bacterial ribosomal protein bL33 family.

The chain is Large ribosomal subunit protein bL33 from Aeromonas hydrophila subsp. hydrophila (strain ATCC 7966 / DSM 30187 / BCRC 13018 / CCUG 14551 / JCM 1027 / KCTC 2358 / NCIMB 9240 / NCTC 8049).